Reading from the N-terminus, the 1454-residue chain is ABC transporter G family member 39 (1454 aa).

One can recognise an ABC transporter 1 domain in the interval 175–448 (LGFFHLLPSK…FEYFGFQCPE (274 aa)). Residue 208–215 (GPPSSGKT) coordinates ATP. Residues 526–739 (ELFKACFDRE…GQTAIVMNEF (214 aa)) form the ABC transmembrane type-2 1 domain. Transmembrane regions (helical) follow at residues 544 to 564 (FVYV…MTVY), 584 to 604 (MFFS…FTVM), 623 to 643 (FALP…GIWI), 663 to 683 (LLAY…LGAI), 689 to 709 (ISNS…GFII), 716 to 736 (PWMT…AIVM), and 775 to 795 (FWIC…FYIL). Residues 812 to 824 (EEGKDKQKGENRG) show a composition bias toward basic and acidic residues. Residues 812 to 838 (EEGKDKQKGENRGTEGSVVELNSSSNK) are disordered. Positions 853–1106 (LAFNNVNYYV…LVEYFEAVEG (254 aa)) constitute an ABC transporter 2 domain. An ATP-binding site is contributed by 898 to 905 (GVSGAGKT). Positions 1178-1392 (TQTKACFWKQ…TLYGLITSQV (215 aa)) constitute an ABC transmembrane type-2 2 domain. 7 helical membrane-spanning segments follow: residues 1199–1219 (AIRF…FWQI), 1231–1251 (NFFG…AATV), 1285–1303 (IMYN…YSMI), 1312–1332 (FLWF…YGMM), 1342–1362 (IAGI…GFLI), 1367–1387 (IPIW…LYGL), and 1423–1443 (FLPV…FVFA).

It belongs to the ABC transporter superfamily. ABCG family. PDR (TC 3.A.1.205) subfamily.

It localises to the membrane. Its function is as follows. May be a general defense protein. This Arabidopsis thaliana (Mouse-ear cress) protein is ABC transporter G family member 39 (ABCG39).